A 94-amino-acid chain; its full sequence is Trp operon repressor homolog (94 aa).

A DNA-binding region spans residues 58 to 81 (QREIAEKYGVSIAQITRGSNALKG).

This sequence belongs to the TrpR family. Homodimer.

Its subcellular location is the cytoplasm. In terms of biological role, this protein is an aporepressor. When complexed with L-tryptophan it binds the operator region of the trp operon and prevents the initiation of transcription. The chain is Trp operon repressor homolog from Chlamydia trachomatis serovar A (strain ATCC VR-571B / DSM 19440 / HAR-13).